We begin with the raw amino-acid sequence, 281 residues long: Ribosomal RNA small subunit methyltransferase A (281 aa).

The S-adenosyl-L-methionine site is built by N18, L20, G45, E66, D91, and N118.

The protein belongs to the class I-like SAM-binding methyltransferase superfamily. rRNA adenine N(6)-methyltransferase family. RsmA subfamily.

Its subcellular location is the cytoplasm. The catalysed reaction is adenosine(1518)/adenosine(1519) in 16S rRNA + 4 S-adenosyl-L-methionine = N(6)-dimethyladenosine(1518)/N(6)-dimethyladenosine(1519) in 16S rRNA + 4 S-adenosyl-L-homocysteine + 4 H(+). Functionally, specifically dimethylates two adjacent adenosines (A1518 and A1519) in the loop of a conserved hairpin near the 3'-end of 16S rRNA in the 30S particle. May play a critical role in biogenesis of 30S subunits. This chain is Ribosomal RNA small subunit methyltransferase A, found in Histophilus somni (strain 129Pt) (Haemophilus somnus).